The sequence spans 592 residues: Zinc metalloproteinase dpy-31 (592 aa).

A signal peptide spans 1–18 (MHKIFIIFGLLSLCAAHS). The propeptide occupies 19 to 127 (LRDLSNKDEE…TEGKTRVKRK (109 aa)). Residues 22-46 (LSNKDEEDPPSSAPGVRKRRMMSEE) are disordered. Residues 127–326 (KFIGSNLRRW…IRLMNKIYCS (200 aa)) enclose the Peptidase M12A domain. An N-linked (GlcNAc...) asparagine glycan is attached at N167. Disulfide bonds link C170–C325 and C193–C214. A Zn(2+)-binding site is contributed by H222. E223 is an active-site residue. Residues H226 and H232 each coordinate Zn(2+). Positions 349-361 (CRCPDGFTGQYCE) constitute an EGF-like domain. C371 and C399 are oxidised to a cystine. A CUB domain is found at 371–487 (CGGKISLTRS…KGFEARARAV (117 aa)). A glycan (N-linked (GlcNAc...) asparagine) is linked at N438. The 51-residue stretch at 490 to 540 (AGNWNSWSPWTACSATCGACGSRMRTRTCPPGNACSGEPVETQICNTQACT) folds into the TSP type-1 domain. 3 disulfides stabilise this stretch: C502-C534, C506-C539, and C518-C524.

The cofactor is Zn(2+). In terms of tissue distribution, expressed in hypodermis, rectal and vulval epithelial cells and amphid socket cells.

Its subcellular location is the secreted. Functionally, metalloprotease which cleaves the carboxyl terminus of procollagens, such as sqt-3, to mature collagens. Involved in cuticular collagen maturation. In Caenorhabditis elegans, this protein is Zinc metalloproteinase dpy-31.